A 566-amino-acid chain; its full sequence is Protein OBERON 1 (566 aa).

Polar residues predominate over residues 1-10 (MGTSSGSNLP). The interval 1 to 79 (MGTSSGSNLP…KTGPDSHDQH (79 aa)) is disordered. Residues 18–29 (QQLQTSLSLVSS) show a composition bias toward low complexity. Residues 47-60 (ESASSQETWPTSKS) are compositionally biased toward polar residues. Residues 64–79 (RKTDSGKTGPDSHDQH) show a composition bias toward basic and acidic residues. The PHD-type zinc finger occupies 225–289 (LCMCVICNKF…LFKCRACNHT (65 aa)). Residues 407–522 (EEKTRMYKKA…LFEKIKEQES (116 aa)) are a coiled coil. Residues 545–566 (YNASSPRVDPRSNQRNPFRSNP) form a disordered region. A compositionally biased stretch (polar residues) spans 555-566 (RSNQRNPFRSNP).

Self-interacts. Interacts with OBE2, OBE3 and OBE4. Binds to VPg of pea seed borne mosaic virus (PSbMV), turnip mosaic virus (TuMV) and lettuce mosaic virus (LMV), but not with VPg of tobacco etch virus (TEV), cowpea mosaic virus (CPMV), tomato black ring virus (TBRV) and grapevine fan leaf virus (GFLV). Interacts with RBL. Expressed in roots, seedlings, stems, leaves, flowers and siliques, especially in the vasculature.

It is found in the nucleus. Its subcellular location is the nucleoplasm. Functionally, probable transcription factor that acts together with OBE2 for the maintenance and/or establishment of both the shoot and root meristems, probably by controlling the expression of the meristem genes such as WUS, PLT1 and PLT2 and of genes required for auxin responses. Promotes cell meristematic activity via the WUSCHEL-CLAVATA pathway. Involved in the development of the basal pole and in auxin-mediated root and vascular development in the embryo. Confers sensitivity to turnip mosaic virus (TuMV) probably by promoting viral movement and multiplication via interaction with TuMV VPg. This Arabidopsis thaliana (Mouse-ear cress) protein is Protein OBERON 1.